The chain runs to 98 residues: DNA-binding protein Fis (98 aa).

A DNA-binding region (H-T-H motif) is located at residues 74-93; the sequence is QTRAAVMMGINRGTLRKKLK.

Belongs to the transcriptional regulatory Fis family. In terms of assembly, homodimer.

Its function is as follows. Activates ribosomal RNA transcription. Plays a direct role in upstream activation of rRNA promoters. This Aeromonas hydrophila subsp. hydrophila (strain ATCC 7966 / DSM 30187 / BCRC 13018 / CCUG 14551 / JCM 1027 / KCTC 2358 / NCIMB 9240 / NCTC 8049) protein is DNA-binding protein Fis.